We begin with the raw amino-acid sequence, 430 residues long: Alpha-1,6-mannosyl-glycoprotein 2-beta-N-acetylglucosaminyltransferase (430 aa).

Over 1 to 12 (MANLWKKQRLRD) the chain is Cytoplasmic. Residues 13–35 (TGLCRLGILFAVTLSIVLMLVSV) form a helical; Signal-anchor for type II membrane protein membrane-spanning segment. The Lumenal portion of the chain corresponds to 36-430 (PRTALNGSSI…YRYSSSSASP (395 aa)). N-linked (GlcNAc...) asparagine glycans are attached at residues N41 and N61. Residues 104–108 (YVHNR) and D135 each bind substrate. An intrachain disulfide couples C177 to C188. 205-209 (SLKHH) is a substrate binding site. Position 237 (D237) interacts with Mn(2+). A disulfide bridge links C259 with C262. N-linked (GlcNAc...) asparagine glycosylation occurs at N295. A disulfide bridge connects residues C310 and C414. H345 contributes to the Mn(2+) binding site.

This sequence belongs to the glycosyltransferase 16 (GT16) protein family. The cofactor is Mn(2+).

The protein localises to the golgi apparatus membrane. The enzyme catalyses an N(4)-{beta-D-GlcNAc-(1-&gt;2)-alpha-D-Man-(1-&gt;3)-[alpha-D-Man-(1-&gt;6)]-beta-D-Man-(1-&gt;4)-beta-D-GlcNAc-(1-&gt;4)-beta-D-GlcNAc}-L-asparaginyl-[protein] + UDP-N-acetyl-alpha-D-glucosamine = N(4)-{beta-D-GlcNAc-(1-&gt;2)-alpha-D-Man-(1-&gt;3)-[beta-D-GlcNAc-(1-&gt;2)-alpha-D-Man-(1-&gt;6)]-beta-D-Man-(1-&gt;4)-beta-D-GlcNAc-(1-&gt;4)-beta-D-GlcNAc}-L-asparaginyl-[protein] + UDP + H(+). Its pathway is protein modification; protein glycosylation. In terms of biological role, catalyzes an essential step in the conversion of oligo-mannose and hybrid to complex N-glycans. The protein is Alpha-1,6-mannosyl-glycoprotein 2-beta-N-acetylglucosaminyltransferase of Arabidopsis thaliana (Mouse-ear cress).